The sequence spans 394 residues: Glycerol-1-phosphate dehydrogenase [NAD(P)+] (394 aa).

NAD(+) is bound by residues Asp-54, 116–120, and 138–141; these read GTIHD and TAPS. Residue Asp-143 participates in substrate binding. Ser-147 provides a ligand contact to NAD(+). Residue Asp-190 coordinates substrate. Ni(2+)-binding residues include Asp-190 and His-270. His-274 contacts substrate. Position 290 (His-290) interacts with Ni(2+).

This sequence belongs to the glycerol-1-phosphate dehydrogenase family. In terms of assembly, homodimer. Ni(2+) serves as cofactor.

The protein localises to the cytoplasm. The catalysed reaction is sn-glycerol 1-phosphate + NAD(+) = dihydroxyacetone phosphate + NADH + H(+). It carries out the reaction sn-glycerol 1-phosphate + NADP(+) = dihydroxyacetone phosphate + NADPH + H(+). Functionally, catalyzes the NAD(P)H-dependent reduction of dihydroxyacetonephosphate (DHAP or glycerone phosphate) to glycerol 1-phosphate (G1P). The G1P thus generated is probably used for the synthesis of phosphoglycerolipids in Gram-positive bacterial species. Prefers NADH over NADPH as coenzyme. Is also able to catalyze the reverse reaction, i.e. the NAD(+)-dependent oxidation of G1P but not of G3P. Does not possess glycerol dehydrogenase activity. In Bacillus subtilis (strain 168), this protein is Glycerol-1-phosphate dehydrogenase [NAD(P)+] (egsA).